The primary structure comprises 624 residues: tRNA uridine 5-carboxymethylaminomethyl modification enzyme MnmG (624 aa).

FAD is bound by residues glycine 13–glycine 18, valine 125, and serine 180. Residue glycine 272–phenylalanine 286 coordinates NAD(+). Glutamine 369 contributes to the FAD binding site.

It belongs to the MnmG family. In terms of assembly, homodimer. Heterotetramer of two MnmE and two MnmG subunits. FAD serves as cofactor.

The protein resides in the cytoplasm. NAD-binding protein involved in the addition of a carboxymethylaminomethyl (cmnm) group at the wobble position (U34) of certain tRNAs, forming tRNA-cmnm(5)s(2)U34. This is tRNA uridine 5-carboxymethylaminomethyl modification enzyme MnmG from Thermodesulfovibrio yellowstonii (strain ATCC 51303 / DSM 11347 / YP87).